A 426-amino-acid polypeptide reads, in one-letter code: Histidine--tRNA ligase (426 aa).

It belongs to the class-II aminoacyl-tRNA synthetase family. Homodimer.

The protein localises to the cytoplasm. It carries out the reaction tRNA(His) + L-histidine + ATP = L-histidyl-tRNA(His) + AMP + diphosphate + H(+). The protein is Histidine--tRNA ligase of Prochlorococcus marinus (strain MIT 9301).